Consider the following 485-residue polypeptide: RAC-beta serine/threonine-protein kinase B (485 aa).

Positions 5–109 (MVIKEGWLQK…WIIAIQTVAN (105 aa)) constitute a PH domain. Residues serine 132 and serine 135 are each glycosylated (O-linked (GlcNAc) serine). Residues 156-413 (FDYLKLLGKG…AQEVMSHGFF (258 aa)) form the Protein kinase domain. ATP-binding positions include 162-170 (LGKGTFGKV) and lysine 185. Catalysis depends on aspartate 279, which acts as the Proton acceptor. An O-linked (GlcNAc) threonine glycan is attached at threonine 310. Position 313 is a phosphothreonine (threonine 313). Threonine 317 is a glycosylation site (O-linked (GlcNAc) threonine). One can recognise an AGC-kinase C-terminal domain in the interval 414–485 (ASINWQDVTE…QFSYSSSIRE (72 aa)). The segment at 454 to 485 (LTPPDRYDNLDALESEQRPHFPQFSYSSSIRE) is disordered. Positions 458–472 (DRYDNLDALESEQRP) are enriched in basic and acidic residues. Serine 478 is modified (phosphoserine). Serine 478 carries O-linked (GlcNAc) serine; alternate glycosylation.

Belongs to the protein kinase superfamily. AGC Ser/Thr protein kinase family. RAC subfamily. In terms of processing, phosphorylation on Thr-313 and Ser-478 is required for full activity. Phosphorylation of the activation loop at Thr-313 by PDPK1/PDK1 is a prerequisite for full activation. Phosphorylation by mTORC2 at Ser-478 in response to growth factors plays a key role in AKT1 activation by facilitating subsequent phosphorylation of the activation loop by PDPK1/PDK1.

The enzyme catalyses L-seryl-[protein] + ATP = O-phospho-L-seryl-[protein] + ADP + H(+). The catalysed reaction is L-threonyl-[protein] + ATP = O-phospho-L-threonyl-[protein] + ADP + H(+). With respect to regulation, two specific sites, one in the kinase domain (Thr-313) and the other in the C-terminal regulatory region (Ser-478), need to be phosphorylated for its full activation. Akt2-b is one of several closely related serine/threonine-protein kinases known as the AKT kinase, and which regulate many processes including metabolism, proliferation, cell survival, growth and angiogenesis. This is mediated through serine and/or threonine phosphorylation of a range of downstream substrates. Over 100 substrate candidates have been reported so far, but for most of them, no isoform specificity has been reported. May be involved in the inhibition of ciliogenesis. This chain is RAC-beta serine/threonine-protein kinase B (akt2-b), found in Xenopus laevis (African clawed frog).